We begin with the raw amino-acid sequence, 63 residues long: Cytochrome c oxidase subunit 7C, mitochondrial (63 aa).

The transit peptide at 1–16 directs the protein to the mitochondrion; sequence MLGQSIRRFTTSVVRR. The Mitochondrial matrix portion of the chain corresponds to 17-34; the sequence is SHYEEGPGKNLPFSVENK. The residue at position 25 (Lys-25) is an N6-acetyllysine; alternate. Lys-25 carries the N6-succinyllysine; alternate modification. Residues 35–57 form a helical membrane-spanning segment; the sequence is WRLLAMMTVYFGSGFAAPFFIVR. Over 58-63 the chain is Mitochondrial intermembrane; that stretch reads HQLLKK.

Belongs to the cytochrome c oxidase VIIc family. Component of the cytochrome c oxidase (complex IV, CIV), a multisubunit enzyme composed of 14 subunits. The complex is composed of a catalytic core of 3 subunits MT-CO1, MT-CO2 and MT-CO3, encoded in the mitochondrial DNA, and 11 supernumerary subunits COX4I, COX5A, COX5B, COX6A, COX6B, COX6C, COX7A, COX7B, COX7C, COX8 and NDUFA4, which are encoded in the nuclear genome. The complex exists as a monomer or a dimer and forms supercomplexes (SCs) in the inner mitochondrial membrane with NADH-ubiquinone oxidoreductase (complex I, CI) and ubiquinol-cytochrome c oxidoreductase (cytochrome b-c1 complex, complex III, CIII), resulting in different assemblies (supercomplex SCI(1)III(2)IV(1) and megacomplex MCI(2)III(2)IV(2)). Interacts with RAB5IF.

The protein resides in the mitochondrion inner membrane. The protein operates within energy metabolism; oxidative phosphorylation. In terms of biological role, component of the cytochrome c oxidase, the last enzyme in the mitochondrial electron transport chain which drives oxidative phosphorylation. The respiratory chain contains 3 multisubunit complexes succinate dehydrogenase (complex II, CII), ubiquinol-cytochrome c oxidoreductase (cytochrome b-c1 complex, complex III, CIII) and cytochrome c oxidase (complex IV, CIV), that cooperate to transfer electrons derived from NADH and succinate to molecular oxygen, creating an electrochemical gradient over the inner membrane that drives transmembrane transport and the ATP synthase. Cytochrome c oxidase is the component of the respiratory chain that catalyzes the reduction of oxygen to water. Electrons originating from reduced cytochrome c in the intermembrane space (IMS) are transferred via the dinuclear copper A center (CU(A)) of subunit 2 and heme A of subunit 1 to the active site in subunit 1, a binuclear center (BNC) formed by heme A3 and copper B (CU(B)). The BNC reduces molecular oxygen to 2 water molecules using 4 electrons from cytochrome c in the IMS and 4 protons from the mitochondrial matrix. In Mus musculus (Mouse), this protein is Cytochrome c oxidase subunit 7C, mitochondrial (Cox7c).